Here is a 426-residue protein sequence, read N- to C-terminus: Mothers against decapentaplegic homolog 7 (426 aa).

Residues 13-55 (LWRSRAPGGEDEEEGAGGGGGGGELRGEGATDSRAHGAGGGGP) form a disordered region. The span at 37-47 (LRGEGATDSRA) shows a compositional bias: basic and acidic residues. An N6-acetyllysine; alternate mark is found at K64 and K70. Glycyl lysine isopeptide (Lys-Gly) (interchain with G-Cter in ubiquitin); alternate cross-links involve residues K64 and K70. Positions 64 to 207 (KAVRGAKGHH…LSRLCELESP (144 aa)) constitute an MH1 domain. Zn(2+)-binding residues include C125, C180, C192, and H197. The short motif at 208-211 (PPPY) is the PY-motif element. The segment at 208–217 (PPPYSRYPMD) is important for interaction with SMURF2. S249 is subject to Phosphoserine. Residues 261–426 (WCVVAYWEEK…CWLEVIFNSR (166 aa)) enclose the MH2 domain.

It belongs to the dwarfin/SMAD family. Interacts with WWP1. Interacts with COPS5. Interacts with NEDD4L. Interacts with STAMBP. Interacts with RNF111, AXIN1 and AXIN2. Interacts with PPP1R15A. Interacts (via MH2 domain) with EP300. Interacts with ACVR1B, SMURF1, SMURF2 and TGFBR1; SMAD7 recruits SMURF1 and SMURF2 to the TGF-beta receptor and regulates its degradation. Interacts with PDPK1 (via PH domain). Interacts with TSC22D1/TSC-22; the interaction requires TGF-beta and the interaction is inhibited by TGFBR1. Phosphorylation on Ser-249 does not affect its stability, nuclear localization or inhibitory function in TGFB signaling; however it affects its ability to regulate transcription. Phosphorylated by PDPK1. In terms of processing, ubiquitinated by WWP1. Polyubiquitinated by RNF111, which is enhanced by AXIN1 and promotes proteasomal degradation. In response to TGF-beta, ubiquitinated by SMURF1; which promotes its degradation. Post-translationally, acetylation prevents ubiquitination and degradation mediated by SMURF1. In terms of tissue distribution, ubiquitous with higher expression in the lung and vascular endothelium.

The protein resides in the nucleus. It is found in the cytoplasm. Antagonist of signaling by TGF-beta (transforming growth factor) type 1 receptor superfamily members; has been shown to inhibit TGF-beta (Transforming growth factor) and activin signaling by associating with their receptors thus preventing SMAD2 access. Functions as an adapter to recruit SMURF2 to the TGF-beta receptor complex. Also acts by recruiting the PPP1R15A-PP1 complex to TGFBR1, which promotes its dephosphorylation. Positively regulates PDPK1 kinase activity by stimulating its dissociation from the 14-3-3 protein YWHAQ which acts as a negative regulator. The chain is Mothers against decapentaplegic homolog 7 (SMAD7) from Homo sapiens (Human).